We begin with the raw amino-acid sequence, 247 residues long: Uridylate kinase (247 aa).

15–18 contacts ATP; sequence KLSG. Positions 23-28 are involved in allosteric activation by GTP; sequence GEEGFG. G57 serves as a coordination point for UMP. Residues G58 and R62 each contribute to the ATP site. UMP is bound by residues D77 and 138-145; that span reads TGNPFCTT. Residues T165, Y171, and D174 each contribute to the ATP site.

Belongs to the UMP kinase family. Homohexamer.

The protein localises to the cytoplasm. The enzyme catalyses UMP + ATP = UDP + ADP. Its pathway is pyrimidine metabolism; CTP biosynthesis via de novo pathway; UDP from UMP (UMPK route): step 1/1. Allosterically activated by GTP. Inhibited by UTP. Functionally, catalyzes the reversible phosphorylation of UMP to UDP. This chain is Uridylate kinase, found in Shewanella loihica (strain ATCC BAA-1088 / PV-4).